The primary structure comprises 310 residues: Olfactory receptor 5P55 (310 aa).

At 1–25 (METQNHTTVTEFILLGLTESSTLRV) the chain is on the extracellular side. Asn-5 carries an N-linked (GlcNAc...) asparagine glycan. Residues 26–46 (ILFMVFLGIYTVTLVGNFSII) form a helical membrane-spanning segment. At 47-54 (SLIRSCPQ) the chain is on the cytoplasmic side. Residues 55–75 (LHTPMYLFLSHLAFVDIGFST) traverse the membrane as a helical segment. The Extracellular portion of the chain corresponds to 76 to 99 (SITPTMFKGFLGNRLVLSVAACIA). Cys-97 and Cys-189 form a disulfide bridge. A helical membrane pass occupies residues 100-120 (QFCITVTFGTVECFLLAVMAY). At 121 to 133 (DRYVAICSPLLYS) the chain is on the cytoplasmic side. The helical transmembrane segment at 134 to 154 (THMSPRICFLLVGASYVGGCV) threads the bilayer. The Extracellular segment spans residues 155 to 196 (NSGAFTSCLSILSFCGPNQIDHFFCDFPAVLKLSCSDVSIIG). A helical membrane pass occupies residues 197–217 (IIPSISAGSIIVITVFVIAVS). Topologically, residues 218 to 237 (YAYILITILKMRSTEGRQKA) are cytoplasmic. Residues 238-258 (FSTCTSHLTAVTLYYGTITFI) form a helical membrane-spanning segment. The Extracellular segment spans residues 259-271 (YVMPKSNYSTAQN). N-linked (GlcNAc...) asparagine glycosylation is present at Asn-265. Residues 272-292 (KILSVFYTVVIPMLNPLIYSL) form a helical membrane-spanning segment. Topologically, residues 293 to 310 (RNRDVKEALRKAIIRIFP) are cytoplasmic.

It belongs to the G-protein coupled receptor 1 family.

It is found in the cell membrane. In terms of biological role, potential odorant receptor. The polypeptide is Olfactory receptor 5P55 (Mus musculus (Mouse)).